The sequence spans 187 residues: Peptidyl-tRNA hydrolase (187 aa).

Tyrosine 15 provides a ligand contact to tRNA. Histidine 20 functions as the Proton acceptor in the catalytic mechanism. TRNA-binding residues include phenylalanine 65, asparagine 67, and asparagine 113.

It belongs to the PTH family. In terms of assembly, monomer.

The protein resides in the cytoplasm. The enzyme catalyses an N-acyl-L-alpha-aminoacyl-tRNA + H2O = an N-acyl-L-amino acid + a tRNA + H(+). Hydrolyzes ribosome-free peptidyl-tRNAs (with 1 or more amino acids incorporated), which drop off the ribosome during protein synthesis, or as a result of ribosome stalling. In terms of biological role, catalyzes the release of premature peptidyl moieties from peptidyl-tRNA molecules trapped in stalled 50S ribosomal subunits, and thus maintains levels of free tRNAs and 50S ribosomes. This chain is Peptidyl-tRNA hydrolase, found in Methylococcus capsulatus (strain ATCC 33009 / NCIMB 11132 / Bath).